The primary structure comprises 529 residues: GMP synthase [glutamine-hydrolyzing] (529 aa).

The Glutamine amidotransferase type-1 domain occupies 9-211; the sequence is RILILDFGSQ…VKDICGCECL (203 aa). Cys-86 functions as the Nucleophile in the catalytic mechanism. Catalysis depends on residues His-185 and Glu-187. Residues 212-404 enclose the GMPS ATP-PPase domain; sequence WTPATIIDDA…LGLPYDMLYR (193 aa). ATP is bound at residue 239–245; that stretch reads SGGVDSS.

As to quaternary structure, homodimer.

It catalyses the reaction XMP + L-glutamine + ATP + H2O = GMP + L-glutamate + AMP + diphosphate + 2 H(+). It functions in the pathway purine metabolism; GMP biosynthesis; GMP from XMP (L-Gln route): step 1/1. Functionally, catalyzes the synthesis of GMP from XMP. This chain is GMP synthase [glutamine-hydrolyzing], found in Aeromonas hydrophila subsp. hydrophila (strain ATCC 7966 / DSM 30187 / BCRC 13018 / CCUG 14551 / JCM 1027 / KCTC 2358 / NCIMB 9240 / NCTC 8049).